The chain runs to 390 residues: MPLNIEKYILKTNRFGGTLKKYPEDFIVEEIMPDGTVLEVGKEIDFLDETPWNGSFIHFTLEKRNWNTMDALSAIVRATKTKRKNFGFAGTKDKFAVTTQRMGCFGLKKEQLESVKIPEIIIKDIQKSNKKLRMGDLFGNRFTINIRDIEKKYMELENLSDLKLDHVLNYFGIQRFGLKRPITHIVGKFIYERDFESAFYTYCGTPISETGDEKEARELVDSGNFKGALKLFSKGNEYEKRLIQQYFKYKDFKMAFTALPPQLNSMFVNAYQAYLFNEMVNERYNFGFEPLTGDILEDNIPTGALIGYNTEFGKGIQGEIEKEIFNRENIDLKKFKIEDFGNFYGTRRKLITPVYDFKSEFKEKVLTLSFKLERGNYATIVTREFTGNLG.

D93 functions as the Nucleophile in the catalytic mechanism. In terms of domain architecture, TRUD spans 166-353; that stretch reads HVLNYFGIQR…YGTRRKLITP (188 aa).

This sequence belongs to the pseudouridine synthase TruD family.

It catalyses the reaction uridine(13) in tRNA = pseudouridine(13) in tRNA. Could be responsible for synthesis of pseudouridine from uracil-13 in transfer RNAs. In Methanococcus vannielii (strain ATCC 35089 / DSM 1224 / JCM 13029 / OCM 148 / SB), this protein is Probable tRNA pseudouridine synthase D.